Here is a 455-residue protein sequence, read N- to C-terminus: Ribulose bisphosphate carboxylase large chain (455 aa).

K5 carries the N6,N6,N6-trimethyllysine modification. The substrate site is built by N114 and T164. The Proton acceptor role is filled by K166. Residue K168 coordinates substrate. Residues K192, D194, and E195 each contribute to the Mg(2+) site. N6-carboxylysine is present on K192. H285 serves as the catalytic Proton acceptor. The substrate site is built by R286, H318, and S370.

Belongs to the RuBisCO large chain family. Type I subfamily. As to quaternary structure, heterohexadecamer of 8 large chains and 8 small chains; disulfide-linked. The disulfide link is formed within the large subunit homodimers. The cofactor is Mg(2+). In terms of processing, the disulfide bond which can form in the large chain dimeric partners within the hexadecamer appears to be associated with oxidative stress and protein turnover.

The protein localises to the plastid. It localises to the chloroplast. The enzyme catalyses 2 (2R)-3-phosphoglycerate + 2 H(+) = D-ribulose 1,5-bisphosphate + CO2 + H2O. It carries out the reaction D-ribulose 1,5-bisphosphate + O2 = 2-phosphoglycolate + (2R)-3-phosphoglycerate + 2 H(+). In terms of biological role, ruBisCO catalyzes two reactions: the carboxylation of D-ribulose 1,5-bisphosphate, the primary event in carbon dioxide fixation, as well as the oxidative fragmentation of the pentose substrate in the photorespiration process. Both reactions occur simultaneously and in competition at the same active site. The polypeptide is Ribulose bisphosphate carboxylase large chain (Lupinus paraguariensis (Lupine)).